The chain runs to 215 residues: MSLFGLGSRNQKTFRPKKSAPTGSKGAQLQKHIDATLGSGNLREAVKLPPGEDINEWLAVNTVDFFNQVNTMFGTLTEFCTPSNCPTMTAGPKYEYRWADGVTIKKPIEVSAPKYVEYLMDWIESQLDDETIFPQRLGAPFPPNFRDVVKTIFKRLFRVYAHVYHSHFQKIVSLKEEAHLNTCFKHFVLFTWEFRLIEKAELAPLEDLVDSIIQL.

The interval 1–29 (MSLFGLGSRNQKTFRPKKSAPTGSKGAQL) is disordered. Zn(2+)-binding residues include cysteine 80, cysteine 85, histidine 162, and histidine 167.

The protein belongs to the MOB1/phocein family. Isoform 1 is constitutively expressed. Isoform 2 is specifically expressed in flowers bud during sporogenesis and gametogenesis.

It localises to the cytoplasm. The protein localises to the cytoskeleton. The protein resides in the phragmoplast. In Medicago sativa subsp. falcata (Sickle medic), this protein is MOB kinase activator-like 1A.